A 230-amino-acid polypeptide reads, in one-letter code: uncharacterized protein (230 aa).

The N-terminal stretch at 1–22 (MNIRSFLLISIFTAISYLVVDG) is a signal peptide. The Lumenal portion of the chain corresponds to 23–167 (ATPRTFAPSA…YTPYGGVKAL (145 aa)). The tract at residues 55–90 (SSSSSSSSISTSHDSQPSTSSSSPSSTSTSSSSGTS) is disordered. The helical transmembrane segment at 168–188 (IGILVGVVVGSVFLLAIVMVI) threads the bilayer. Over 189-230 (ARIWGPRLLANKDQNNNNEDLDSNLVSKDSEGTPQITYASNF) the chain is Cytoplasmic. The segment at 208-230 (DLDSNLVSKDSEGTPQITYASNF) is disordered.

The protein localises to the endoplasmic reticulum membrane. This is an uncharacterized protein from Schizosaccharomyces pombe (strain 972 / ATCC 24843) (Fission yeast).